The following is a 623-amino-acid chain: Mu-like prophage FluMu defective tail fiber protein (623 aa).

To phage Mu protein S.

This chain is Mu-like prophage FluMu defective tail fiber protein, found in Haemophilus influenzae (strain ATCC 51907 / DSM 11121 / KW20 / Rd).